Here is a 516-residue protein sequence, read N- to C-terminus: Immunoglobulin G-binding protein A (516 aa).

Residues 1 to 36 form the signal peptide; the sequence is MKKKNIYSIRKLGVGIASVTLGTLLISGGVTPAANA. The YSIRK-G/S signaling motif signature appears at 7-18; that stretch reads YSIRKLGVGIAS. An Immunoglobulin-binding region E repeat occupies 37–92; that stretch reads AQHDEAQQNAFYQVLNMPNLNADQRNGFIQSLKDDPSQSANVLGEAQKLNDSQAPK. Residues 93–153 form an Immunoglobulin-binding region D repeat; that stretch reads ADAQQNNFNK…KKLNESQAPK (61 aa). The Immunoglobulin-binding region A repeat unit spans residues 154–211; sequence ADNNFNKEQQNAFYEILNMPNLNEEQRNGFIQSLKDDPSQSANLLSEAKKLNESQAPK. The Immunoglobulin-binding region B repeat unit spans residues 212-269; the sequence is ADNKFNKEQQNAFYEILHLPNLNEEQRNGFIQSLKDDPSQSANLLAEAKKLNDAQAPK. An Immunoglobulin-binding region C repeat occupies 270–327; that stretch reads ADNKFNKEQQNAFYEILHLPNLTEEQRNGFIQSLKDDPSVSKEILAEAKKLNDAQAPK. Residues 318–420 show a composition bias toward basic and acidic residues; the sequence is KKLNDAQAPK…GNKPGKEDGN (103 aa). Disordered regions lie at residues 318-440 and 467-487; these read KKLN…ANGT and KKQP…ETGE. Repeat copies occupy residues 333 to 340, 341 to 348, 349 to 356, 357 to 364, 365 to 372, 373 to 380, 381 to 388, 389 to 396, 397 to 404, 405 to 412, and 413 to 420. The 11 X 8 AA approximate tandem repeats stretch occupies residues 333 to 420; that stretch reads KPGKEDNNKP…GNKPGKEDGN (88 aa). Residues 421–465 form the LysM domain; sequence GVHVVKPGDTVNDIAKANGTTADKIAADNKLADKNMIKPGQELVV. The short motif at 482 to 486 is the LPXTG sorting signal element; sequence LPETG. Threonine 485 carries the pentaglycyl murein peptidoglycan amidated threonine modification. Positions 486–516 are cleaved as a propeptide — removed by sortase A; that stretch reads GEENPFIGTTVFGGLSLALGAALLAGRRREL.

The protein belongs to the immunoglobulin-binding protein SpA family. Interacts with host TNFRSF1A; this interaction leads to the stimulation of both surface expression and shedding of TNFRSF1A.

The protein localises to the secreted. It is found in the cell wall. Functionally, plays a role in the inhibition of the host innate and adaptive immune responses. Possesses five immunoglobulin-binding domains that capture both the fragment crystallizable region (Fc region) and the Fab region (part of Ig that identifies antigen) of immunoglobulins. In turn, Staphylococcus aureus is protected from phagocytic killing via inhibition of Ig Fc region. In addition, the host elicited B-cell response is prevented due to a decrease of antibody-secreting cell proliferation that enter the bone marrow, thereby decreasing long-term antibody production. Inhibits osteogenesis by preventing osteoblast proliferation and expression of alkaline phosphatase, type I collagen, osteopontin and osteocalcin. Acts directly as a pro-inflammatory factor in the lung through its ability to bind and activate tumor necrosis factor alpha receptor 1/TNFRSF1A. This is Immunoglobulin G-binding protein A (spa) from Staphylococcus aureus (strain NCTC 8325 / PS 47).